We begin with the raw amino-acid sequence, 196 residues long: GTP cyclohydrolase-2 (196 aa).

A GTP-binding site is contributed by 49–53 (RIHSE). The Zn(2+) site is built by Cys-54, Cys-65, and Cys-67. Residues Gln-70, 92–94 (EGR), and Thr-114 contribute to the GTP site. The Proton acceptor role is filled by Asp-126. Catalysis depends on Arg-128, which acts as the Nucleophile. Residues Thr-149 and Lys-154 each coordinate GTP.

It belongs to the GTP cyclohydrolase II family. In terms of assembly, homodimer. Zn(2+) serves as cofactor.

The enzyme catalyses GTP + 4 H2O = 2,5-diamino-6-hydroxy-4-(5-phosphoribosylamino)-pyrimidine + formate + 2 phosphate + 3 H(+). It participates in cofactor biosynthesis; riboflavin biosynthesis; 5-amino-6-(D-ribitylamino)uracil from GTP: step 1/4. Its function is as follows. Catalyzes the conversion of GTP to 2,5-diamino-6-ribosylamino-4(3H)-pyrimidinone 5'-phosphate (DARP), formate and pyrophosphate. In Hamiltonella defensa subsp. Acyrthosiphon pisum (strain 5AT), this protein is GTP cyclohydrolase-2.